The primary structure comprises 273 residues: Dermonecrotic toxin LdSicTox-alphaIB3aiv (273 aa).

Residue H5 is part of the active site. 2 residues coordinate Mg(2+): E25 and D27. Residue H41 is the Nucleophile of the active site. Cystine bridges form between C45–C51 and C47–C190. D85 serves as a coordination point for Mg(2+).

It belongs to the arthropod phospholipase D family. Class II subfamily. Mg(2+) serves as cofactor. As to expression, expressed by the venom gland.

The protein localises to the secreted. It carries out the reaction an N-(acyl)-sphingosylphosphocholine = an N-(acyl)-sphingosyl-1,3-cyclic phosphate + choline. It catalyses the reaction an N-(acyl)-sphingosylphosphoethanolamine = an N-(acyl)-sphingosyl-1,3-cyclic phosphate + ethanolamine. The enzyme catalyses a 1-acyl-sn-glycero-3-phosphocholine = a 1-acyl-sn-glycero-2,3-cyclic phosphate + choline. The catalysed reaction is a 1-acyl-sn-glycero-3-phosphoethanolamine = a 1-acyl-sn-glycero-2,3-cyclic phosphate + ethanolamine. In terms of biological role, dermonecrotic toxins cleave the phosphodiester linkage between the phosphate and headgroup of certain phospholipids (sphingolipid and lysolipid substrates), forming an alcohol (often choline) and a cyclic phosphate. This toxin acts on sphingomyelin (SM). It may also act on ceramide phosphoethanolamine (CPE), lysophosphatidylcholine (LPC) and lysophosphatidylethanolamine (LPE), but not on lysophosphatidylserine (LPS), and lysophosphatidylglycerol (LPG). It acts by transphosphatidylation, releasing exclusively cyclic phosphate products as second products. Induces dermonecrosis, hemolysis, increased vascular permeability, edema, inflammatory response, and platelet aggregation. The protein is Dermonecrotic toxin LdSicTox-alphaIB3aiv of Loxosceles deserta (Desert recluse spider).